A 252-amino-acid polypeptide reads, in one-letter code: Imidazole glycerol phosphate synthase subunit HisF (252 aa).

Active-site residues include Asp-11 and Asp-130.

The protein belongs to the HisA/HisF family. As to quaternary structure, heterodimer of HisH and HisF.

The protein localises to the cytoplasm. The catalysed reaction is 5-[(5-phospho-1-deoxy-D-ribulos-1-ylimino)methylamino]-1-(5-phospho-beta-D-ribosyl)imidazole-4-carboxamide + L-glutamine = D-erythro-1-(imidazol-4-yl)glycerol 3-phosphate + 5-amino-1-(5-phospho-beta-D-ribosyl)imidazole-4-carboxamide + L-glutamate + H(+). Its pathway is amino-acid biosynthesis; L-histidine biosynthesis; L-histidine from 5-phospho-alpha-D-ribose 1-diphosphate: step 5/9. In terms of biological role, IGPS catalyzes the conversion of PRFAR and glutamine to IGP, AICAR and glutamate. The HisF subunit catalyzes the cyclization activity that produces IGP and AICAR from PRFAR using the ammonia provided by the HisH subunit. The sequence is that of Imidazole glycerol phosphate synthase subunit HisF from Persephonella marina (strain DSM 14350 / EX-H1).